We begin with the raw amino-acid sequence, 27 residues long: Pregnancy-associated glycoprotein 55 (27 aa).

It belongs to the peptidase A1 family. Glycosylated. Placenta.

In Capra hircus (Goat), this protein is Pregnancy-associated glycoprotein 55 (PAG55).